The sequence spans 173 residues: Ribulose bisphosphate carboxylase small subunit, chloroplastic 1 (173 aa).

The N-terminal 49 residues, 1–49 (MASIPATVATVAQANMVAPFTGLKANAAFPVTKKVNDFSTLPSNGGRVQ), are a transit peptide targeting the chloroplast.

It belongs to the RuBisCO small chain family. In terms of assembly, heterohexadecamer of 8 large and 8 small subunits.

Its subcellular location is the plastid. The protein resides in the chloroplast. RuBisCO catalyzes two reactions: the carboxylation of D-ribulose 1,5-bisphosphate, the primary event in carbon dioxide fixation, as well as the oxidative fragmentation of the pentose substrate. Both reactions occur simultaneously and in competition at the same active site. Although the small subunit is not catalytic it is essential for maximal activity. This chain is Ribulose bisphosphate carboxylase small subunit, chloroplastic 1, found in Flaveria pringlei.